The following is a 683-amino-acid chain: Protein kinase C eta type (683 aa).

The C2 domain occupies 1 to 118 (MSSGTMKFNG…LRTAGTSDTF (118 aa)). Phosphoserine is present on residues Ser-28 and Ser-32. 2 Phorbol-ester/DAG-type zinc fingers span residues 171 to 222 (GHKF…VTAC) and 245 to 295 (PHKF…APNC). Phosphoserine is present on Ser-317. Positions 355 to 614 (FEFIRVLGKG…EHEILRHPFF (260 aa)) constitute a Protein kinase domain. ATP contacts are provided by residues 361-369 (LGKGSFGKV) and Lys-384. Asp-479 acts as the Proton acceptor in catalysis. Position 513 is a phosphothreonine; by PDPK1 (Thr-513). The AGC-kinase C-terminal domain maps to 615 to 683 (KEIDWAQLNH…FSYVSPELQL (69 aa)). The residue at position 656 (Thr-656) is a Phosphothreonine. A Phosphoserine modification is found at Ser-675.

Belongs to the protein kinase superfamily. AGC Ser/Thr protein kinase family. PKC subfamily. In terms of assembly, interacts with FYN. Interacts with RALA. Interacts with DGKQ. As to expression, predominantly expressed in lung and skin.

Its subcellular location is the cytoplasm. It catalyses the reaction L-seryl-[protein] + ATP = O-phospho-L-seryl-[protein] + ADP + H(+). The catalysed reaction is L-threonyl-[protein] + ATP = O-phospho-L-threonyl-[protein] + ADP + H(+). Its activity is regulated as follows. Novel PKCs (PRKCD, PRKCE, PRKCH and PRKCQ) are calcium-insensitive, but activated by diacylglycerol (DAG) and phosphatidylserine. Three specific sites; Thr-513 (activation loop of the kinase domain), Thr-656 (turn motif) and Ser-675 (hydrophobic region), need to be phosphorylated for its full activation. In terms of biological role, calcium-independent, phospholipid- and diacylglycerol (DAG)-dependent serine/threonine-protein kinase that is involved in the regulation of cell differentiation in keratinocytes and pre-B cell receptor, mediates regulation of epithelial tight junction integrity and foam cell formation, and is required for glioblastoma proliferation and apoptosis prevention in MCF-7 cells. In keratinocytes, binds and activates the tyrosine kinase FYN, which in turn blocks epidermal growth factor receptor (EGFR) signaling and leads to keratinocyte growth arrest and differentiation. Associates with the cyclin CCNE1-CDK2-CDKN1B complex and inhibits CDK2 kinase activity, leading to RB1 dephosphorylation and thereby G1 arrest in keratinocytes. In association with RALA activates actin depolymerization, which is necessary for keratinocyte differentiation. In the pre-B cell receptor signaling, functions downstream of BLNK by up-regulating IRF4, which in turn activates L chain gene rearrangement. Regulates epithelial tight junctions (TJs) by phosphorylating occludin (OCLN) on threonine residues, which is necessary for the assembly and maintenance of TJs. In association with PLD2 and via TLR4 signaling, is involved in lipopolysaccharide (LPS)-induced RGS2 down-regulation and foam cell formation. Upon PMA stimulation, mediates glioblastoma cell proliferation by activating the mTOR pathway, the PI3K/AKT pathway and the ERK1-dependent phosphorylation of ELK1. Involved in the protection of glioblastoma cells from irradiation-induced apoptosis by preventing caspase-9 activation. In camptothecin-treated MCF-7 cells, regulates NF-kappa-B upstream signaling by activating IKBKB, and confers protection against DNA damage-induced apoptosis. Promotes oncogenic functions of ATF2 in the nucleus while blocking its apoptotic function at mitochondria. Phosphorylates ATF2 which promotes its nuclear retention and transcriptional activity and negatively regulates its mitochondrial localization. This chain is Protein kinase C eta type (Prkch), found in Mus musculus (Mouse).